The primary structure comprises 938 residues: RIPOR family member 3 (938 aa).

Phosphoserine is present on residues Ser9, Ser24, and Ser340. Position 345 is a phosphothreonine (Thr345). Phosphoserine is present on residues Ser351 and Ser384. Disordered stretches follow at residues 402-430 (EMDS…FLPV) and 579-603 (FGGS…SPSE).

This sequence belongs to the RIPOR family.

This is RIPOR family member 3 from Mus musculus (Mouse).